Consider the following 452-residue polypeptide: Lichenan permease IIC component (452 aa).

The region spanning 8-421 (LEEKVMPIAG…AVSFVVYYPF (414 aa)) is the PTS EIIC type-3 domain. A run of 10 helical transmembrane segments spans residues 31 to 51 (GIIL…IGNL), 72 to 92 (LAYP…FGIA), 104 to 124 (LSAG…QVPF), 138 to 158 (GIPL…IAMV), 187 to 207 (FVAL…RLIV), 218 to 238 (IVSV…GGSL), 246 to 266 (LLWA…APIW), 291 to 311 (FFDI…VVTM), 351 to 373 (LLLP…MSTG), and 402 to 422 (SGAV…YPFF).

The protein resides in the cell membrane. Its function is as follows. The phosphoenolpyruvate-dependent sugar phosphotransferase system (PTS), a major carbohydrate active -transport system, catalyzes the phosphorylation of incoming sugar substrates concomitant with their translocation across the cell membrane. This system is involved in lichenan transport. This Bacillus subtilis (strain 168) protein is Lichenan permease IIC component (licC).